Reading from the N-terminus, the 269-residue chain is Troponin I (269 aa).

The segment at 1 to 104 (MADDEKKAAA…AKKGFMTPER (104 aa)) is disordered. The residue at position 2 (A2) is an N-acetylalanine. Residues 9 to 50 (AAPAAAPAAAAKPAAPAAAPAANGKAAPAANGKAAPAAAAAP) show a composition bias toward low complexity. Over residues 56–91 (DPNDPKVKAEEAKKAKQAEIERKRAEVRKRMEEASK) the composition is skewed to basic and acidic residues. The segment at 162–171 (ERMYICEGQK) is troponin T-interaction. Residues 189–202 (NAQVNDLRGKFVKP) are actin-binding. N6,N6,N6-trimethyllysine occurs at positions 201 and 205. The tract at residues 239-269 (TLEEEEKEKKPDWSKGKPGDAKVKEEVEAEA) is disordered.

The protein belongs to the troponin I family. In terms of assembly, binds to actin and tropomyosin. All isoforms are expressed in somatic muscle. Isoforms containing exon 6a1 (isoforms 1 and 2) are expressed in all muscles but highest expression is in abdominal muscle and splanchnic muscle of the gut. Isoforms containing exon 6b1 (isoforms 5, 6, 9 and 10) are highly expressed in the tergal depressor of trochanter (TDT) muscle.

Troponin I is the ATPase inhibitory subunit of troponin in the thin filament regulatory complex. Involved in the development and maintenance of muscle and nervous system. May also be involved in the cytoskeletal apparatus. The sequence is that of Troponin I (wupA) from Drosophila melanogaster (Fruit fly).